The primary structure comprises 254 residues: 4-hydroxy-tetrahydrodipicolinate reductase (254 aa).

An NAD(+)-binding site is contributed by 7 to 12 (GASGRI). Residue Arg-35 participates in NADP(+) binding. NAD(+)-binding positions include 91–93 (GTT) and 115–118 (AHNM). His-147 acts as the Proton donor/acceptor in catalysis. (S)-2,3,4,5-tetrahydrodipicolinate is bound at residue His-148. The active-site Proton donor is the Lys-151. Position 157–158 (157–158 (GT)) interacts with (S)-2,3,4,5-tetrahydrodipicolinate.

Belongs to the DapB family.

The protein resides in the cytoplasm. It catalyses the reaction (S)-2,3,4,5-tetrahydrodipicolinate + NAD(+) + H2O = (2S,4S)-4-hydroxy-2,3,4,5-tetrahydrodipicolinate + NADH + H(+). It carries out the reaction (S)-2,3,4,5-tetrahydrodipicolinate + NADP(+) + H2O = (2S,4S)-4-hydroxy-2,3,4,5-tetrahydrodipicolinate + NADPH + H(+). Its pathway is amino-acid biosynthesis; L-lysine biosynthesis via DAP pathway; (S)-tetrahydrodipicolinate from L-aspartate: step 4/4. Its function is as follows. Catalyzes the conversion of 4-hydroxy-tetrahydrodipicolinate (HTPA) to tetrahydrodipicolinate. The sequence is that of 4-hydroxy-tetrahydrodipicolinate reductase from Helicobacter pylori (strain G27).